Reading from the N-terminus, the 364-residue chain is Phosphoserine aminotransferase (364 aa).

An L-glutamate-binding site is contributed by Arg-46. Pyridoxal 5'-phosphate-binding positions include 80-81, Trp-106, Thr-157, Asp-176, and Gln-199; that span reads AR. Residue Lys-200 is modified to N6-(pyridoxal phosphate)lysine. Residue 241-242 coordinates pyridoxal 5'-phosphate; it reads NT.

Belongs to the class-V pyridoxal-phosphate-dependent aminotransferase family. SerC subfamily. In terms of assembly, homodimer. It depends on pyridoxal 5'-phosphate as a cofactor.

It is found in the cytoplasm. The enzyme catalyses O-phospho-L-serine + 2-oxoglutarate = 3-phosphooxypyruvate + L-glutamate. It catalyses the reaction 4-(phosphooxy)-L-threonine + 2-oxoglutarate = (R)-3-hydroxy-2-oxo-4-phosphooxybutanoate + L-glutamate. Its pathway is amino-acid biosynthesis; L-serine biosynthesis; L-serine from 3-phospho-D-glycerate: step 2/3. It participates in cofactor biosynthesis; pyridoxine 5'-phosphate biosynthesis; pyridoxine 5'-phosphate from D-erythrose 4-phosphate: step 3/5. Catalyzes the reversible conversion of 3-phosphohydroxypyruvate to phosphoserine and of 3-hydroxy-2-oxo-4-phosphonooxybutanoate to phosphohydroxythreonine. The protein is Phosphoserine aminotransferase of Vibrio parahaemolyticus serotype O3:K6 (strain RIMD 2210633).